A 175-amino-acid polypeptide reads, in one-letter code: Di-N-acetylchitobiase (175 aa).

The first 38 residues, 1 to 38 (MARLQLAGSRRLVPLPRRAPRLAPLLLPLLLALPDGAR), serve as a signal peptide directing secretion. Residues 39–175 (ADCPCKVPAL…SFHHEIKGSQ (137 aa)) form the GH18 domain. Asn-115 is a glycosylation site (N-linked (GlcNAc...) asparagine). The active-site Proton donor is Glu-143.

The protein belongs to the glycosyl hydrolase 18 family.

The protein localises to the lysosome. In terms of biological role, involved in the degradation of asparagine-linked glycoproteins. Hydrolyze of N-acetyl-beta-D-glucosamine (1-4)N-acetylglucosamine chitobiose core from the reducing end of the bond, it requires prior cleavage by glycosylasparaginase. This Bos taurus (Bovine) protein is Di-N-acetylchitobiase (CTBS).